Consider the following 264-residue polypeptide: Nicotinamide N-methyltransferase (264 aa).

R18 bears the Citrulline; alternate mark. The S-adenosyl-L-methionine site is built by Y20 and Y25. Position 39 is an N6-acetyllysine (K39). S-adenosyl-L-methionine-binding residues include G63, Y69, D85, and N90. At R132 the chain carries Citrulline; alternate. S-adenosyl-L-methionine-binding positions include 142 to 143 (DV) and T163. R181 carries the citrulline; alternate modification. Residues D197 and S213 each coordinate nicotinamide.

This sequence belongs to the class I-like SAM-binding methyltransferase superfamily. NNMT/PNMT/TEMT family. In terms of assembly, monomer. In terms of processing, deiminated by PADI1 and PADI2. Predominantly expressed in the liver. A lower expression is seen in the kidney, lung, skeletal muscle, placenta and heart. Not detected in the brain or pancreas.

The protein resides in the cytoplasm. It catalyses the reaction nicotinamide + S-adenosyl-L-methionine = 1-methylnicotinamide + S-adenosyl-L-homocysteine. The protein operates within cofactor metabolism. Its pathway is amino-acid degradation. With respect to regulation, inactivated by deimination on Arg-132. Functionally, catalyzes the N-methylation of nicotinamide using the universal methyl donor S-adenosyl-L-methionine to form N1-methylnicotinamide and S-adenosyl-L-homocysteine, a predominant nicotinamide/vitamin B3 clearance pathway. Plays a central role in regulating cellular methylation potential, by consuming S-adenosyl-L-methionine and limiting its availability for other methyltransferases. Actively mediates genome-wide epigenetic and transcriptional changes through hypomethylation of repressive chromatin marks, such as H3K27me3. In a developmental context, contributes to low levels of the repressive histone marks that characterize pluripotent embryonic stem cell pre-implantation state. Acts as a metabolic regulator primarily on white adipose tissue energy expenditure as well as hepatic gluconeogenesis and cholesterol biosynthesis. In white adipocytes, regulates polyamine flux by consuming S-adenosyl-L-methionine which provides for propylamine group in polyamine biosynthesis, whereas by consuming nicotinamide controls NAD(+) levels through the salvage pathway. Via its product N1-methylnicotinamide regulates protein acetylation in hepatocytes, by repressing the ubiquitination and increasing the stability of SIRT1 deacetylase. Can also N-methylate other pyridines structurally related to nicotinamide and play a role in xenobiotic detoxification. This is Nicotinamide N-methyltransferase from Homo sapiens (Human).